A 379-amino-acid chain; its full sequence is MSNLFQNYTRADLEFIKAEGNYLFDTQGKKYLDFSTGIGVTNLGFHPQVQVALQKQAEQIWHTPNLYQNSLQEEVAAKLMAGKDYLAFFCNSGAEANEAAIKIARKATGKQEIITFQNSFHGRTFGSMSATGQDKIKVGFGDAVPHFHYAVFNDLNSVKALVTENTAAVMLELVQGESGVLPAEQDFVTALADYCQKNGLLLIIDEVQTGMGRTGKLYAFQHYGIEPDIFTLAKGLANGVPVGAMLAKKQFGSAFGPGSHGSTFGGNKLAMAASSAVLDIMTKAGFLEQAWENAHYLQEQLTSALQVADTVTQVRGLGYMIGIETTADLGQLVKATRDRGLIVLTAGTNVIRLLPPLTLTKDEIDQGIMILQEVFEQHN.

Pyridoxal 5'-phosphate is bound by residues 93-94 (GA) and Phe120. Position 123 (Arg123) interacts with N(2)-acetyl-L-ornithine. 205–208 (DEVQ) is a binding site for pyridoxal 5'-phosphate. An N6-(pyridoxal phosphate)lysine modification is found at Lys234. Residue Ser262 participates in N(2)-acetyl-L-ornithine binding. Position 263 (Thr263) interacts with pyridoxal 5'-phosphate.

It belongs to the class-III pyridoxal-phosphate-dependent aminotransferase family. ArgD subfamily. Homodimer. It depends on pyridoxal 5'-phosphate as a cofactor.

It is found in the cytoplasm. The enzyme catalyses N(2)-acetyl-L-ornithine + 2-oxoglutarate = N-acetyl-L-glutamate 5-semialdehyde + L-glutamate. The protein operates within amino-acid biosynthesis; L-arginine biosynthesis; N(2)-acetyl-L-ornithine from L-glutamate: step 4/4. The polypeptide is Acetylornithine aminotransferase (Streptococcus mutans serotype c (strain ATCC 700610 / UA159)).